We begin with the raw amino-acid sequence, 688 residues long: Methionine--tRNA ligase (688 aa).

The short motif at 13 to 23 (PYANGPIHIGH) is the 'HIGH' region element. 4 residues coordinate Zn(2+): Cys-144, Cys-147, Cys-157, and Cys-160. The 'KMSKS' region motif lies at 334 to 338 (KMSKS). Residue Lys-337 coordinates ATP. The tRNA-binding domain maps to 582–688 (DFAKIDLRVA…AGAVPGMRVR (107 aa)).

Belongs to the class-I aminoacyl-tRNA synthetase family. MetG type 1 subfamily. Homodimer. The cofactor is Zn(2+).

The protein resides in the cytoplasm. It carries out the reaction tRNA(Met) + L-methionine + ATP = L-methionyl-tRNA(Met) + AMP + diphosphate. In terms of biological role, is required not only for elongation of protein synthesis but also for the initiation of all mRNA translation through initiator tRNA(fMet) aminoacylation. The sequence is that of Methionine--tRNA ligase from Ralstonia nicotianae (strain ATCC BAA-1114 / GMI1000) (Ralstonia solanacearum).